The following is a 117-amino-acid chain: Large ribosomal subunit protein bL19 (117 aa).

This sequence belongs to the bacterial ribosomal protein bL19 family.

Functionally, this protein is located at the 30S-50S ribosomal subunit interface and may play a role in the structure and function of the aminoacyl-tRNA binding site. The polypeptide is Large ribosomal subunit protein bL19 (Leptothrix cholodnii (strain ATCC 51168 / LMG 8142 / SP-6) (Leptothrix discophora (strain SP-6))).